Reading from the N-terminus, the 1138-residue chain is Nuclear pore complex-interacting protein family member B4 (1138 aa).

A helical transmembrane segment spans residues 63 to 87; the sequence is VIIAFPTSYKVVITLWIVYLWVSLL. Disordered regions lie at residues 241-263, 291-620, and 873-1138; these read NRMGHQPPPPTQQHSITDNSLSL, TPLP…NIKT, and ERLR…RRLS. The segment covering 252 to 262 has biased composition (polar residues); it reads QQHSITDNSLS. Pro residues predominate over residues 349–359; that stretch reads PLPPSALPSAP. Basic and acidic residues-rich tracts occupy residues 406-416, 448-458, 490-500, 532-542, 574-584, 908-918, 950-960, and 992-1002; these read DNIKTPAERLR.

This sequence belongs to the NPIP family.

The protein localises to the membrane. This Homo sapiens (Human) protein is Nuclear pore complex-interacting protein family member B4 (NPIPB4).